A 492-amino-acid polypeptide reads, in one-letter code: 2-succinylbenzoate--CoA ligase (492 aa).

This sequence belongs to the ATP-dependent AMP-binding enzyme family. MenE subfamily.

The enzyme catalyses 2-succinylbenzoate + ATP + CoA = 2-succinylbenzoyl-CoA + AMP + diphosphate. Its pathway is quinol/quinone metabolism; 1,4-dihydroxy-2-naphthoate biosynthesis; 1,4-dihydroxy-2-naphthoate from chorismate: step 5/7. It participates in quinol/quinone metabolism; menaquinone biosynthesis. Converts 2-succinylbenzoate (OSB) to 2-succinylbenzoyl-CoA (OSB-CoA). The protein is 2-succinylbenzoate--CoA ligase of Staphylococcus aureus (strain USA300 / TCH1516).